The sequence spans 180 residues: MPKFLDALAGFAVTLGSMFKKPITEGYPEKPGPVAPRYHGRHQLNRYPDGLEKCIGCELCAWACPADAIYVEGADNTADERYSPGERYGRVYQINYLRCIGCGLCIEACPTRALTMTTEYEMADDNRADLIWGKDKLLAPLQEGMQAPPHDMAPGKTDDDYYLGNVTPITPVPSGTEDAR.

2 4Fe-4S ferredoxin-type domains span residues Leu44–Ala74 and Arg90–Glu119. [4Fe-4S] cluster contacts are provided by Cys54, Cys57, Cys60, Cys64, Cys99, Cys102, Cys105, and Cys109. The disordered stretch occupies residues Met145 to Arg180.

It belongs to the complex I 23 kDa subunit family. In terms of assembly, NDH-1 is composed of 14 different subunits. Subunits NuoA, H, J, K, L, M, N constitute the membrane sector of the complex. The cofactor is [4Fe-4S] cluster.

The protein resides in the cell membrane. It catalyses the reaction a quinone + NADH + 5 H(+)(in) = a quinol + NAD(+) + 4 H(+)(out). Functionally, NDH-1 shuttles electrons from NADH, via FMN and iron-sulfur (Fe-S) centers, to quinones in the respiratory chain. The immediate electron acceptor for the enzyme in this species is believed to be menaquinone. Couples the redox reaction to proton translocation (for every two electrons transferred, four hydrogen ions are translocated across the cytoplasmic membrane), and thus conserves the redox energy in a proton gradient. The protein is NADH-quinone oxidoreductase subunit I of Mycolicibacterium smegmatis (strain ATCC 700084 / mc(2)155) (Mycobacterium smegmatis).